Reading from the N-terminus, the 63-residue chain is Large ribosomal subunit protein bL28A (63 aa).

It belongs to the bacterial ribosomal protein bL28 family.

The sequence is that of Large ribosomal subunit protein bL28A from Nocardia farcinica (strain IFM 10152).